Here is a 710-residue protein sequence, read N- to C-terminus: Early transcription factor 82 kDa subunit (710 aa).

This sequence belongs to the poxviridae VETF large subunit family. As to quaternary structure, heterodimer of a 70 kDa and a 82 kDa subunit. Part of the early transcription complex composed of ETF, RAP94/OPG109, and the DNA-directed RNA polymerase.

Its subcellular location is the virion. In terms of biological role, acts with RNA polymerase to initiate transcription from early gene promoters. Is recruited by the RPO-associated protein of 94 kDa RAP94/OPG109 to form the early transcription complex, which also contains the core RNA polymerase. ETF heterodimer binds to early gene promoters. The protein is Early transcription factor 82 kDa subunit (OPG133) of Bos taurus (Bovine).